Here is a 99-residue protein sequence, read N- to C-terminus: MALNAQDIARIANLARLELSSTESERMLGQLNDFFGIVEKMQAVDTSGVSPLSHPVAAIQDIALRLREDIASEPDQRDANQRSAPAVERGLFLVPKVIE.

This sequence belongs to the GatC family. As to quaternary structure, heterotrimer of A, B and C subunits.

The enzyme catalyses L-glutamyl-tRNA(Gln) + L-glutamine + ATP + H2O = L-glutaminyl-tRNA(Gln) + L-glutamate + ADP + phosphate + H(+). The catalysed reaction is L-aspartyl-tRNA(Asn) + L-glutamine + ATP + H2O = L-asparaginyl-tRNA(Asn) + L-glutamate + ADP + phosphate + 2 H(+). In terms of biological role, allows the formation of correctly charged Asn-tRNA(Asn) or Gln-tRNA(Gln) through the transamidation of misacylated Asp-tRNA(Asn) or Glu-tRNA(Gln) in organisms which lack either or both of asparaginyl-tRNA or glutaminyl-tRNA synthetases. The reaction takes place in the presence of glutamine and ATP through an activated phospho-Asp-tRNA(Asn) or phospho-Glu-tRNA(Gln). The sequence is that of Aspartyl/glutamyl-tRNA(Asn/Gln) amidotransferase subunit C from Delftia acidovorans (strain DSM 14801 / SPH-1).